A 510-amino-acid chain; its full sequence is MYSLDIIPGKLSLKQLREVSRHPTKLSLDPNALPDMLISADVVAQVIKEDKTVYGINTGFGLLANTRIAEKDLETLQRSIVLSHAAGIGEFMDDATVRLMIILKINSLSRGYSGIRPLVIDALIQLVNSEVYPCIPKKGSVGASGDLAPLAHMSTVLLGEGEARYQDKIISGKEALDIAGLTPITLAPKEGLALLNGTQASTAFALEGLFAAEDLYASATVCGAMSVEAALGSRKPFDPRIHRVRGHRSQMDAALAYRHLLAQSSEIGLSHQCCERVQDPYSLRCQPQVMGACLQQIRNSADILEIEANSVSDNPLVFADDGDIISGGNFHAEPVAMAADNLALAISEIGSLSERRMALLIDSGLSKLPPFLVDNGGVNSGFMIAQVTAAALASENKTLAHPASVDSLPTSANQEDHVSMATFAGRRLGDMAENTRGILAVELLAAAQGLDFRAPNKSSDRIEIAKSLLRERVDFYDKDRYFAPDIAKANSLLKEATYNHLMPETLLPSL.

A cross-link (5-imidazolinone (Ala-Gly)) is located at residues 143-145 (ASG). Serine 144 is modified (2,3-didehydroalanine (Ser)).

The protein belongs to the PAL/histidase family. Post-translationally, contains an active site 4-methylidene-imidazol-5-one (MIO), which is formed autocatalytically by cyclization and dehydration of residues Ala-Ser-Gly.

The protein localises to the cytoplasm. It carries out the reaction L-histidine = trans-urocanate + NH4(+). Its pathway is amino-acid degradation; L-histidine degradation into L-glutamate; N-formimidoyl-L-glutamate from L-histidine: step 1/3. This Aliivibrio fischeri (strain MJ11) (Vibrio fischeri) protein is Histidine ammonia-lyase.